The following is a 420-amino-acid chain: WD repeat-containing protein 21 (420 aa).

Positions 73–75 match the DDB-boX motif; the sequence is RQF. WD repeat units follow at residues 251–289, 293–332, and 341–383; these read QSKG…ECVQ, HGSS…SKKR, and GHSN…PFKE.

It is found in the cytoplasm. It localises to the nucleus. This Schizosaccharomyces pombe (strain 972 / ATCC 24843) (Fission yeast) protein is WD repeat-containing protein 21 (wdr21).